We begin with the raw amino-acid sequence, 553 residues long: Protein PNS1 (553 aa).

The segment at 1–53 (MFGEGNKPTEPVPAYDAGQDPFQGPNASKNQYQGSAADYNGAPPPPASQPGNQ) is disordered. The Cytoplasmic segment spans residues 1–94 (MFGEGNKPTE…EDSKPKWNDW (94 aa)). The span at 25-34 (PNASKNQYQG) shows a compositional bias: polar residues. A helical transmembrane segment spans residues 95–115 (PFTIFFAGCVIAFIVVAAITL). The Extracellular portion of the chain corresponds to 116 to 142 (RAWSQNSSSQGSGVYDGANTGTLTTNS). Asn121 carries N-linked (GlcNAc...) asparagine glycosylation. The helical transmembrane segment at 143–163 (AIMLAISCIIAFVFSIIGIVL) threads the bilayer. Topologically, residues 164–169 (ARMFPK) are cytoplasmic. The helical transmembrane segment at 170 to 190 (FFIIAGILFNIIAGLATAIMY) threads the bilayer. Residues 191 to 192 (LS) are Extracellular-facing. The helical transmembrane segment at 193-213 (LKYYSAGIVFLVFTAICALFY) threads the bilayer. The Cytoplasmic segment spans residues 214-241 (WRMRHRIPFTVAVLKTVMDVMKSYPQTW). The chain crosses the membrane as a helical span at residues 242-262 (FVTLIGSIIATAFSILFSAVI). Residues 263-287 (VATYMKYDDKANNPGCSTNGGSCSN) lie on the Extracellular side of the membrane. Residues 288–308 (AKLIGLLVLVFFCGYYIAEVI) traverse the membrane as a helical segment. Topologically, residues 309–349 (RNVIHCTVSGIFGAWYYFSKSDQGMPKWPGFGALKRSLTYS) are cytoplasmic. The chain crosses the membrane as a helical span at residues 350–370 (FGSICFGSLIVTIIETLKAVL). Topologically, residues 371–385 (RLAVDGVMGGGGADN) are extracellular. A helical membrane pass occupies residues 386–406 (GWMQCLALIANWIFSFLEWLA). Residues 407-450 (RYFNHYAYVFIALYGKPYLRAAKETWYMLREKGIDALINDNLVN) are Cytoplasmic-facing. The chain crosses the membrane as a helical span at residues 451–471 (VALSFFTLFTCYITTLFAYLY). Topologically, residues 472 to 484 (LRYTDPNYNDNNN) are extracellular. The chain crosses the membrane as a helical span at residues 485–505 (FTPALMAFAFVIAMEICNVIT). The Cytoplasmic portion of the chain corresponds to 506-553 (ETIRSGTATFFVALGNDPEVFHLSYPERFDEIFRAYPEVLKKLSHQNV).

It belongs to the CTL (choline transporter-like) family.

It localises to the cell membrane. Probably involved in transport through the plasma membrane. The protein is Protein PNS1 (PNS1) of Kluyveromyces lactis (strain ATCC 8585 / CBS 2359 / DSM 70799 / NBRC 1267 / NRRL Y-1140 / WM37) (Yeast).